A 342-amino-acid polypeptide reads, in one-letter code: Elongation factor Ts (342 aa).

Residues 80–83 (TDFV) are involved in Mg(2+) ion dislocation from EF-Tu.

The protein belongs to the EF-Ts family.

It localises to the cytoplasm. Associates with the EF-Tu.GDP complex and induces the exchange of GDP to GTP. It remains bound to the aminoacyl-tRNA.EF-Tu.GTP complex up to the GTP hydrolysis stage on the ribosome. This Lactobacillus delbrueckii subsp. bulgaricus (strain ATCC 11842 / DSM 20081 / BCRC 10696 / JCM 1002 / NBRC 13953 / NCIMB 11778 / NCTC 12712 / WDCM 00102 / Lb 14) protein is Elongation factor Ts.